A 166-amino-acid polypeptide reads, in one-letter code: 3-hydroxyacyl-[acyl-carrier-protein] dehydratase FabZ (166 aa).

H72 is a catalytic residue.

Belongs to the thioester dehydratase family. FabZ subfamily.

The protein resides in the cytoplasm. It catalyses the reaction a (3R)-hydroxyacyl-[ACP] = a (2E)-enoyl-[ACP] + H2O. Its function is as follows. Involved in unsaturated fatty acids biosynthesis. Catalyzes the dehydration of short chain beta-hydroxyacyl-ACPs and long chain saturated and unsaturated beta-hydroxyacyl-ACPs. This is 3-hydroxyacyl-[acyl-carrier-protein] dehydratase FabZ from Synechococcus sp. (strain JA-2-3B'a(2-13)) (Cyanobacteria bacterium Yellowstone B-Prime).